Reading from the N-terminus, the 345-residue chain is Phosphoribosylformylglycinamidine cyclo-ligase (345 aa).

It belongs to the AIR synthase family.

Its subcellular location is the cytoplasm. The enzyme catalyses 2-formamido-N(1)-(5-O-phospho-beta-D-ribosyl)acetamidine + ATP = 5-amino-1-(5-phospho-beta-D-ribosyl)imidazole + ADP + phosphate + H(+). It participates in purine metabolism; IMP biosynthesis via de novo pathway; 5-amino-1-(5-phospho-D-ribosyl)imidazole from N(2)-formyl-N(1)-(5-phospho-D-ribosyl)glycinamide: step 2/2. This chain is Phosphoribosylformylglycinamidine cyclo-ligase, found in Sodalis glossinidius (strain morsitans).